The sequence spans 149 residues: MGLEKSLMLFPLFVLLLGWVQPSLGRESSAQKFQRQHMDPAGSSSNSPTYCNQMMKRRDMTKGSCKPVNTFVHEPLADVQAICSQENVTCKNGKSNCYKSSSALHITDCHLKGNSKYPNCDYKTSQYQKQIIVACEGNPYVPVHFDATV.

An N-terminal signal peptide occupies residues 1-25 (MGLEKSLMLFPLFVLLLGWVQPSLG). Residues 30–49 (AQKFQRQHMDPAGSSSNSPT) form a disordered region. Residues K32 and R35 each coordinate substrate. The active-site Proton acceptor is the H37. 4 disulfides stabilise this stretch: C51–C109, C65–C120, C83–C135, and C90–C97. A substrate-binding site is contributed by 66-70 (KPVNT). N-linked (GlcNAc...) asparagine glycosylation occurs at N87. Position 91 (K91) interacts with substrate. H144 (proton donor) is an active-site residue.

Belongs to the pancreatic ribonuclease family. Monomer. Interacts with and forms tight 1:1 complexes with RNH1. Dimerization of two such complexes may occur. Interaction with RNH1 inhibits this protein. As to expression, pancreas.

The protein localises to the secreted. The enzyme catalyses an [RNA] containing cytidine + H2O = an [RNA]-3'-cytidine-3'-phosphate + a 5'-hydroxy-ribonucleotide-3'-[RNA].. It carries out the reaction an [RNA] containing uridine + H2O = an [RNA]-3'-uridine-3'-phosphate + a 5'-hydroxy-ribonucleotide-3'-[RNA].. Functionally, endonuclease that catalyzes the cleavage of RNA on the 3' side of pyrimidine nucleotides. Acts on single-stranded and double-stranded RNA. This is Ribonuclease pancreatic (Rnase1) from Mus saxicola (Brown spiny mouse).